Reading from the N-terminus, the 339-residue chain is 4-hydroxy-2-oxovalerate aldolase (339 aa).

The region spanning 7–257 (IRIMDTTLRD…QVGVDLYKIM (251 aa)) is the Pyruvate carboxyltransferase domain. Residue 15 to 16 (RD) participates in substrate binding. A Mn(2+)-binding site is contributed by Asp-16. Catalysis depends on His-19, which acts as the Proton acceptor. Substrate-binding residues include Ser-169 and His-196. His-196 and His-198 together coordinate Mn(2+). Residue Tyr-286 coordinates substrate.

This sequence belongs to the 4-hydroxy-2-oxovalerate aldolase family.

It carries out the reaction (S)-4-hydroxy-2-oxopentanoate = acetaldehyde + pyruvate. This Pelotomaculum thermopropionicum (strain DSM 13744 / JCM 10971 / SI) protein is 4-hydroxy-2-oxovalerate aldolase.